Consider the following 847-residue polypeptide: MVIPATSRFGFRAEFNTKEFQASCISLANEIDAAIGRNEVPGNIQELALILNNVCRRKCDDYQTRAVVMALMISVKSACQLGWFPERETQELLAIIDLMWNGFSCPENVTSCVNSPVTLISQVIERFYPCVKLGHILVSFEAKPESKMMMKDFHISKKMPHSPKQKVGLFVVRTEDISRSNCIVHPQGVSFLLNGKGIDKRVNISMESGPQLPTNVTALLNLGANLLQAIGCFGGSYLIAIAFMDVIPLPNKPLLKDYVHPEVVGSNSDCDIIEGPSRISLSCPISRTRIKLPVKGHVCKHLQCFDFWNYVNMNTRRPSWRCPHCNQSVCYTDIRVDQKLRKILEEVGRNAADVVISADGTWMVETENDEDVELVPETTHDHGDPNSFINLGPTVKNPARDENEMETSTQVEEHNPCLSEIQGPSNDTHRPASDYTMLNQSHTSTNTLPQLPRTLNAFDGQQFVNLPQVINTRDSPASQALPMTFSPTPSPQDILATNAANFGTSMPAAQSSQFQGSHVTSLGNCEGRTSDLMARWNHIYGRVQTQFPPAPLSHHHYSMQNQSPSPAQQRPVPSYIAHPQTFHVNYGENADQRWMPSSIAHPQTLPVNYGGNTNQRPIPSSIAHPQTLPVNYRGNTDHRSTPYSITHLQTLLNYGGNADQRPMPSSITNLQTLPATYGGYAHQRPMSSSITHPRTSPVNYGGTPDQRPMPSSITHPQTLPVSYGGTTDQILNPGGAMGQFSSREFMNLTPANTENWRPQSRMRGSVAPGTGYDHMIIHPTRPVHPQAQTPPAPLSTSYDGADEIQAFIGHPSYPVSNNETQAGTSSLPVAEGLGYSGSFWSMPPETW.

The interval 113–271 (VNSPVTLISQ…EVVGSNSDCD (159 aa)) is interacting domain (IND), required for interaction with MOM1 and PIAL2. Residues 268–349 (SDCDIIEGPS…LRKILEEVGR (82 aa)) form an SP-RING-type zinc finger. Residues C299, H301, C322, and C325 each coordinate Zn(2+). 7 repeat units span residues 569-591 (QRPV…ENAD), 592-614 (QRWM…GNTN), 615-637 (QRPI…GNTD), 638-659 (HRST…GNAD), 660-682 (QRPM…GYAH), 683-705 (QRPM…GTPD), and 706-728 (QRPM…GTTD). The tract at residues 569 to 728 (QRPVPSYIAH…LPVSYGGTTD (160 aa)) is 7 X 23 AA approximate tandem repeats.

It belongs to the PIAL protein ligase family. In terms of assembly, homodimer. Interacts with MOM1 and PIAL2 to form a high molecular mass complex which mediates transcriptional gene silencing at heterochromatin regions. As to expression, expressed in leaves, stems and flowers, and, at low levels, in siliques and old leaves.

Its subcellular location is the nucleus. It functions in the pathway protein modification; protein sumoylation. Functionally, together with MOM1 and PIAL2, regulates transcriptional gene silencing (TGS) independently of changes in DNA methylation. E4-type SUMO ligase that promotes SUMO chain formation in a SCE1-dependent manner and thus contributes to a pathway for proteolytic removal of sumoylation substrates. Involved in stress responses (e.g. osmotic, salt and abscisic acid ABA) and sulfur metabolism. This is E4 SUMO-protein ligase PIAL1 from Arabidopsis thaliana (Mouse-ear cress).